Consider the following 63-residue polypeptide: Frenatin 1.1 (63 aa).

An N-terminal signal peptide occupies residues 1-22 (MAFLKKSLFLVLFLGLVSLSIC). Residues 23–49 (EKEKKEQEDEDENEEEKESEEGSEEKR) constitute a propeptide that is removed on maturation. Residues 25–63 (EKKEQEDEDENEEEKESEEGSEEKRGLLDTLGGILGLGR) form a disordered region. Over residues 30 to 45 (EDEDENEEEKESEEGS) the composition is skewed to acidic residues. Leucine amide is present on Leu-61.

In terms of tissue distribution, expressed by the skin glands.

It is found in the secreted. Antimicrobial peptide with selective activity. Is only active against Micrococcus luteus (MIC=25 ug/ml) and not against Bacillus cereus, Escherichia coli, Leuconostoc mesenteroides, Micrococcus luteus, Pastewella haemolytica, Staphylococcus aureus, Streptococcus faecalis and Streptococcus uberis. In Nyctimystes infrafrenatus (White-lipped tree frog), this protein is Frenatin 1.1.